Here is a 222-residue protein sequence, read N- to C-terminus: DNA-directed RNA polymerase V subunit 5A (222 aa).

Belongs to the archaeal Rpo5/eukaryotic RPB5 RNA polymerase subunit family. As to quaternary structure, component of the RNA polymerase V complex. In terms of tissue distribution, expressed in roots, leaves, siliques and seeds, and to a lower level, in flower buds and flowers.

It localises to the nucleus. Functionally, DNA-dependent RNA polymerase catalyzes the transcription of DNA into RNA using the four ribonucleoside triphosphates as substrates. Component of RNA polymerase V involved in RNA-directed DNA methylation-dependent (RdDM) silencing of endogenous repeated sequences, including transposable elements. Required for establishment of DNA methylation. The protein is DNA-directed RNA polymerase V subunit 5A (NRPE5A) of Arabidopsis thaliana (Mouse-ear cress).